Reading from the N-terminus, the 674-residue chain is MMQESGTETKSNGSAIQNGSSGGNHLLECGSLREGRSNGETPAVDVGTADLAHVQQQQQALQVARQLLLQQQQQQQVSGLKSPKRNDKQPALQVPVSVAMMTPQVITPQQMQQILQQQVLSPQQLQVLLQQQQALMLQQQQLQEFYKKQQEQLQLQLLQQHAGKQPKEQQQVATQQLAFQQQLLQMQQLQQQHLLSLQRQGLLTIQPGQPALPLQPLTQGMIPTELQQLWKEVTSAHTTEETTGNNHSSLDLTTTCVSSSAPSKTSLIMNPHASTNGQLSVHTPKRESLSHEEHPHSHPLYGHGVCKWPGCEAVCEDFQSFLKHLNSEHALDDRSTAQCRVQMQVVQQLELQLAKDKERLQAMMTHLHVKSTEPKTAPQPLNLVSSVTLSKSASEASPQSLPHTPTTPTAPITPATQGPSVITTTSMHTVGPIRRRYSDKYNVPISSDIAQNQEFYKNAEVRPPFTYASLIRQAILESPEKQLTLNEIYNWFTRMFAYFRRNAATWKNAVRHNLSLHKCFVRVENVKGAVWTVDEVEFQKRRPQKISGNPSLIKNMQTSHAYCTPLNAALQASMAENSIPLYTTASMGNPTLGNLASAIREELNGAMEHTNSNESDSSPGRSPLQAVHPVHVKEEPLDPEEAEGPLSLVTTANHSPDFDHDRDYEDEPVNEDME.

The segment covering Met1–Gly19 has biased composition (polar residues). The interval Met1–Val44 is disordered. The residue at position 82 (Ser82) is a Phosphoserine. Residues Met269 to Val281 show a composition bias toward polar residues. A disordered region spans residues Met269–His296. The segment covering Pro284–His296 has biased composition (basic and acidic residues). A Glycyl lysine isopeptide (Lys-Gly) (interchain with G-Cter in SUMO2) cross-link involves residue Lys285. A C2H2-type zinc finger spans residues Gly304 to His329. Residues Val346–Leu367 are leucine-zipper. Residues Lys370 and Lys375 each participate in a glycyl lysine isopeptide (Lys-Gly) (interchain with G-Cter in SUMO2) cross-link. Residues Pro380–Val384 form a CTBP1-binding region. Polar residues predominate over residues Thr388–Leu401. Residues Thr388–Met427 are disordered. Low complexity predominate over residues Pro402–Pro419. Residue Lys440 forms a Glycyl lysine isopeptide (Lys-Gly) (interchain with G-Cter in SUMO2) linkage. The segment at residues Arg462 to Leu552 is a DNA-binding region (fork-head). The disordered stretch occupies residues Glu608–Glu674. A compositionally biased stretch (polar residues) spans His609–Gly620. Thr650 bears the Phosphothreonine mark. Phosphoserine is present on Ser655. The segment covering Tyr664–Glu674 has biased composition (acidic residues).

Forms homodimers and heterodimers with FOXP2 and FOXP4. Dimerization is required for DNA-binding. Self-associates. Interacts with CTBP1. Interacts with NCOR2 and AR. Interacts with FOXP2. Interacts with TBR1. Interacts with AURKA; this interaction facilitates the phosphorylation of FOXP1, which suppresses the expression of FBXL7. Interacts with ZMYM2.

Its subcellular location is the nucleus. Functionally, transcriptional repressor. Can act with CTBP1 to synergistically repress transcription but CTPBP1 is not essential. Plays an important role in the specification and differentiation of lung epithelium. Acts cooperatively with FOXP4 to regulate lung secretory epithelial cell fate and regeneration by restricting the goblet cell lineage program; the function may involve regulation of AGR2. Essential transcriptional regulator of B-cell development. Involved in regulation of cardiac muscle cell proliferation. Involved in the columnar organization of spinal motor neurons. Promotes the formation of the lateral motor neuron column (LMC) and the preganglionic motor column (PGC) and is required for respective appropriate motor axon projections. The segment-appropriate generation of spinal cord motor columns requires cooperation with other Hox proteins. Can regulate PITX3 promoter activity; may promote midbrain identity in embryonic stem cell-derived dopamine neurons by regulating PITX3. Negatively regulates the differentiation of T follicular helper cells T(FH)s. Involved in maintenance of hair follicle stem cell quiescence; the function probably involves regulation of FGF18. Represses transcription of various pro-apoptotic genes and cooperates with NF-kappa B-signaling in promoting B-cell expansion by inhibition of caspase-dependent apoptosis. Binds to CSF1R promoter elements and is involved in regulation of monocyte differentiation and macrophage functions; repression of CSF1R in monocytes seems to involve NCOR2 as corepressor. Involved in endothelial cell proliferation, tube formation and migration indicative for a role in angiogenesis; the role in neovascularization seems to implicate suppression of SEMA5B. Can negatively regulate androgen receptor signaling. Acts as a transcriptional activator of the FBXL7 promoter; this activity is regulated by AURKA. This Bos taurus (Bovine) protein is Forkhead box protein P1 (FOXP1).